A 148-amino-acid chain; its full sequence is D-aminoacyl-tRNA deacylase (148 aa).

The Gly-cisPro motif, important for rejection of L-amino acids motif lies at 137–138; that stretch reads GP.

It belongs to the DTD family. Homodimer.

It localises to the cytoplasm. It catalyses the reaction glycyl-tRNA(Ala) + H2O = tRNA(Ala) + glycine + H(+). The catalysed reaction is a D-aminoacyl-tRNA + H2O = a tRNA + a D-alpha-amino acid + H(+). In terms of biological role, an aminoacyl-tRNA editing enzyme that deacylates mischarged D-aminoacyl-tRNAs. Also deacylates mischarged glycyl-tRNA(Ala), protecting cells against glycine mischarging by AlaRS. Acts via tRNA-based rather than protein-based catalysis; rejects L-amino acids rather than detecting D-amino acids in the active site. By recycling D-aminoacyl-tRNA to D-amino acids and free tRNA molecules, this enzyme counteracts the toxicity associated with the formation of D-aminoacyl-tRNA entities in vivo and helps enforce protein L-homochirality. This chain is D-aminoacyl-tRNA deacylase, found in Lacticaseibacillus casei (strain BL23) (Lactobacillus casei).